The sequence spans 225 residues: Cytidylate kinase (225 aa).

Residue 11–19 coordinates ATP; it reads GPAGAGKGT. The segment covering 169–185 has biased composition (basic and acidic residues); that stretch reads MDRIKSRIEERDARDQS. Positions 169–195 are disordered; the sequence is MDRIKSRIEERDARDQSRATAPLAAAP.

It belongs to the cytidylate kinase family. Type 1 subfamily.

It localises to the cytoplasm. The catalysed reaction is CMP + ATP = CDP + ADP. It catalyses the reaction dCMP + ATP = dCDP + ADP. The sequence is that of Cytidylate kinase from Magnetococcus marinus (strain ATCC BAA-1437 / JCM 17883 / MC-1).